Here is a 3301-residue protein sequence, read N- to C-terminus: MARRPLWWGLPGPSTPVLLLLLLSLFPFSREELGGGGDQDWDPGVATTTGPRAQIGSGAVALCPESPGVWEDGDPGLGVREPVFMRLRVGRQNARNGRGAPEQPNAEVVVQALGSREQEAGQGPGYLLCWHPEISSCGRTGPLRRGSLPLDALSPGDSDLRNSSPHPSELLAQPDGSRPVAFQRNARRSIRKRVETSRCCGKLWEPGHKGQGERSATSTVDRGPFRRDCLPGSLGSGLGEDSAPRAVRTAPTPGSAPRESRTAPGRMRSRGLFRRRFLFERPGPRPPGFPTGPEAKQILSTNQARPRRAANRHPQFPQYNYQTLVPENEAAGTSVLRVVAQDPDPGEAGRLIYSLAALMNSRSLELFSIDPQSGLIRTAAALDRESMERHYLRVTAQDHGSPRLSATTMVAVTVADRNDHAPVFEQAQYRETLRENVEEGYPILQLRATDGDAPPNANLRYRFVGSPAVRTAAAAAFEIDPRSGLISTSGRVDREHMESYELVVEASDQGQEPGPRSATVRVHITVLDENDNAPQFSEKRYVAQVREDVRPHTVVLRVTATDKDKDANGLVHYNIISGNSRGHFAIDSLTGEIQVMAPLDFEAEREYALRIRAQDAGRPPLSNNTGLASIQVVDINDHAPIFVSTPFQVSVLENAPLGHSVIHIQAVDADHGENSRLEYSLTGVASDTPFVINSATGWVSVSGPLDRESVEHYFFGVEARDHGSPPLSASASVTVTVLDVNDNRPEFTMKEYHLRLNEDAAVGTSVVSVTAVDRDANSAISYQITGGNTRNRFAISTQGGVGLVTLALPLDYKQERYFKLVLTASDRALHDHCYVHINITDANTHRPVFQSAHYSVSMNEDRPVGSTVVVISASDDDVGENARITYLLEDNLPQFRIDADSGAITLQAPLDYEDQVTYTLAITARDNGIPQKADTTYVEVMVNDVNDNAPQFVASHYTGLVSEDAPPFTSVLQISATDRDAHANGRVQYTFQNGEDGDGDFTIEPTSGIVRTVRRLDREAVPVYELTAYAVDRGVPPLRTPVSIQVTVQDVNDNAPVFPAEEFEVRVKENSIVGSVVAQITAVDPDDGPNAHIMYQIVEGNIPELFQMDIFSGELTALIDLDYEARQEYVIVVQATSAPLVSRATVHVRLVDQNDNSPVLNNFQILFNNYVSNRSDTFPSGIIGRIPAYDPDVSDHLFYSFERGNELQLLVVNRTSGELRLSRKLDNNRPLVASMLVTVTDGLHSVTAQCVLRVVIITEELLANSLTVRLENMWQERFLSPLLGHFLEGVAAVLATPTEDVFIFNIQNDTDVGGTVLNVSFSALAPRGAGAGAAGPWFSSEELQEQLYVRRAALAARSLLDVLPFDDNVCLREPCENYMKCVSVLRFDSSAPFLASTSTLFRPIQPIAGLRCRCPPGFTGDFCETELDLCYSNPCRNGGACARREGGYTCVCRPRFTDCELDTEAGRCVPGVCRNGGTCTNAPNGGFRCQCPAGGAFEGPRCEVAARSFPPSSFVMFRGLRQRFHLTLSLSFATVQPSGLLFYNGRLNEKHDFLALELVAGQVRLTYSTGESNTVVSPTVPGGLSDGQWHTVHLRYYNKPRTDALGGAQGPSKDKVAVLSVDDCNVAVALQFGAEIGNYSCAAAGVQTSSKKSLDLTGPLLLGGVPNLPENFPVSHKDFIGCMRDLHIDGRRMDMAAFVANNGTMAGCQAKSHFCASGPCKNNGFCSERWGGFSCDCPVGFGGKDCRLTMAHPYHFQGNGTLSWDFGNDMAVSVPWYLGLSFRTRATKGILMQVQLGPHSVLLCKLDRGLLSVTLNRASGHTVHLLLDQMTVSDGRWHDLRLELQEEPGGRRGHHIFMVSLDFTLFQDTMAMGGELQGLKVKQLHVGGLPPSSKEEGHQGLVGCIQGVWIGFTPFGSSALLPPSHRVNVEPGCTVTNPCASGPCPPHADCKDLWQTFSCTCRPGYYGPGCVDACLLNPCQNQGSCRHLQGAPHGYTCDCVSGYFGQHCEHRVDQQCPRGWWGSPTCGPCNCDVHKGFDPNCNKTNGQCHCKEFHYRPRGSDSCLPCDCYPVGSTSRSCAPHSGQCPCRPGALGRQCNSCDSPFAEVTASGCRVLYDACPKSLRSGVWWPQTKFGVLATVPCPRGALGAAVRLCDEDQGWLEPDLFNCTSPAFRELSLLLDGLELNKTALDTVEAKKLAQRLREVTGQTDHYFSQDVRVTARLLAYLLAFESHQQGFGLTATQDAHFNENLLWAGSALLAPETGHLWAALGQRAPGGSPGSAGLVQHLEEYAATLARNMELTYLNPVGLVTPNIMLSIDRMEHPSSTQGARRYPRYHSNLFRGQDAWDPHTHVLLPSQASQPSPSEVLPTSSNAENATASSVVSPPAPLEPESEPGISIVILLVYRALGGLLPAQFQAERRGARLPQNPVMNSPVVSVAVFHGRNFLRGVLVSPINLEFRLLQTANRSKAICVQWDPPGPTDQHGMWTARDCELVHRNGSHARCRCSRTGTFGVLMDASPRERLEGDLELLAVFTHVVVAVSVTALVLTAAVLLSLRSLKSNVRGIHANVAAALGVAELLFLLGIHRTHNQLLCTAVAILLHYFFLSTFAWLLVQGLHLYRMQVEPRNVDRGAMRFYHALGWGVPAVLLGLAVGLDPEGYGNPDFCWISIHEPLIWSFAGPIVLVIVMNGTMFLLAARTSCSTGQREAKKTSVLTLRSSFLLLLLVSASWLFGLLAVNHSILAFHYLHAGLCGLQGLAVLLLFCVLNADARAAWTPACLGKKAAPEETRPAPGPGSGAYNNTALFEESGLIRITLGASTVSSVSSARSGRAQDQDSQRGRSYLRDNVLVRHGSTAEHTERSLQAHAGPTDLDVAMFHRDAGADSDSDSDLSLEEERSLSIPSSESEDNGRTRGRFQRPLRRAAQSERLLAHPKDVDGNDLLSYWPALGECEAAPCALQAWGSERRLGLDSNKDAANNNQPELALTSGDETSLGRAQRQRKGILKNRLQYPLVPQSRGTPELSWCRAATLGHRAVPAASYGRIYAGGGTGSLSQPASRYSSREQLDLLLRRQLSKERLEEVPVPAPVLHPLSRPGSQERLDTAPARLEARDRGSTLPRRQPPRDYPGTMAGRFGSRDALDLGAPREWLSTLPPPRRNRDLDPQHPPLPLSPQRQLSRDPLLPSRPLDSLSRISNSREGLDQVPSRHPSREALGPAPQLLRAREDPASGPSHGPSTEQLDILSSILASFNSSALSSVQSSSTPSGPHTTATASALGPSTPRSATSHSISELSPDSEVPRSEGHS.

Positions 1-31 (MARRPLWWGLPGPSTPVLLLLLLSLFPFSRE) are cleaved as a signal peptide. Over 32–2531 (ELGGGGDQDW…RLEGDLELLA (2500 aa)) the chain is Extracellular. Disordered regions lie at residues 148-189 (LPLD…ARRS) and 202-314 (KLWE…NRHP). Basic residues predominate over residues 267–276 (MRSRGLFRRR). 9 consecutive Cadherin domains span residues 317 to 424 (PQYN…APVF), 425 to 536 (EQAQ…APQF), 537 to 642 (SEKR…APIF), 643 to 747 (VSTP…RPEF), 748 to 849 (TMKE…RPVF), 850 to 952 (QSAH…APQF), 953 to 1058 (VASH…APVF), 1059 to 1160 (PAEE…SPVL), and 1161 to 1257 (NNFQ…VVII). N-linked (GlcNAc...) asparagine glycosylation occurs at Asn623. N-linked (GlcNAc...) asparagine glycosylation occurs at Asn838. N-linked (GlcNAc...) asparagine glycosylation is found at Asn1173, Asn1213, Asn1308, and Asn1318. The region spanning 1366–1424 (DDNVCLREPCENYMKCVSVLRFDSSAPFLASTSTLFRPIQPIAGLRCRCPPGFTGDFCE) is the EGF-like 1; calcium-binding domain. 9 disulfides stabilise this stretch: Cys1370–Cys1381, Cys1375–Cys1412, Cys1414–Cys1423, Cys1430–Cys1441, Cys1435–Cys1450, Cys1452–Cys1459, Cys1468–Cys1479, Cys1473–Cys1489, and Cys1491–Cys1502. Residues 1426-1460 (ELDLCYSNPCRNGGACARREGGYTCVCRPRFTDCE) form the EGF-like 2; calcium-binding domain. Residues 1464–1503 (EAGRCVPGVCRNGGTCTNAPNGGFRCQCPAGGAFEGPRCE) form the EGF-like 3; calcium-binding domain. The 205-residue stretch at 1504 to 1708 (VAARSFPPSS…VANNGTMAGC (205 aa)) folds into the Laminin G-like 1 domain. Asn1638 and Asn1702 each carry an N-linked (GlcNAc...) asparagine glycan. Cystine bridges form between Cys1682-Cys1708, Cys1715-Cys1726, Cys1720-Cys1735, and Cys1737-Cys1746. The 37-residue stretch at 1711–1747 (KSHFCASGPCKNNGFCSERWGGFSCDCPVGFGGKDCR) folds into the EGF-like 4; calcium-binding domain. The Laminin G-like 2 domain occupies 1751 to 1933 (AHPYHFQGNG…SHRVNVEPGC (183 aa)). The N-linked (GlcNAc...) asparagine glycan is linked to Asn1759. Disulfide bonds link Cys1904–Cys1933, Cys1939–Cys1950, Cys1944–Cys1959, Cys1961–Cys1970, Cys1974–Cys1985, Cys1979–Cys1997, Cys1999–Cys2008, Cys2016–Cys2029, and Cys2031–Cys2041. In terms of domain architecture, EGF-like 5; calcium-binding spans 1935 to 1971 (VTNPCASGPCPPHADCKDLWQTFSCTCRPGYYGPGCV). Asp1952 is modified ((3R)-3-hydroxyaspartate). The region spanning 1972 to 2002 (DACLLNPCQNQGSCRHLQGAPHGYTCDCVSG) is the EGF-like 6; calcium-binding domain. In terms of domain architecture, EGF-like 7; calcium-binding spans 2003 to 2042 (YFGQHCEHRVDQQCPRGWWGSPTCGPCNCDVHKGFDPNCN). A glycan (N-linked (GlcNAc...) asparagine) is linked at Asn2042. The EGF-like 8; calcium-binding domain maps to 2044–2079 (TNGQCHCKEFHYRPRGSDSCLPCDCYPVGSTSRSCA). 5 cysteine pairs are disulfide-bonded: Cys2048–Cys2063, Cys2050–Cys2066, Cys2068–Cys2078, Cys2087–Cys2096, and Cys2099–Cys2111. A Laminin EGF-like domain is found at 2066-2113 (CDCYPVGSTSRSCAPHSGQCPCRPGALGRQCNSCDSPFAEVTASGCRV). Tyr2115 carries the post-translational modification Phosphotyrosine. N-linked (GlcNAc...) asparagine glycosylation is found at Asn2166, Asn2185, Asn2375, Asn2465, and Asn2497. The segment at 2353 to 2388 (LLPSQASQPSPSEVLPTSSNAENATASSVVSPPAPL) is disordered. Residues 2355 to 2383 (PSQASQPSPSEVLPTSSNAENATASSVVS) are compositionally biased toward low complexity. One can recognise a GAIN-B domain in the interval 2357 to 2521 (QASQPSPSEV…GVLMDASPRE (165 aa)). 2 cysteine pairs are disulfide-bonded: Cys2471-Cys2503 and Cys2491-Cys2505. Residues 2471–2521 (CVQWDPPGPTDQHGMWTARDCELVHRNGSHARCRCSRTGTFGVLMDASPRE) are GPS. The chain crosses the membrane as a helical span at residues 2532–2552 (VFTHVVVAVSVTALVLTAAVL). The Cytoplasmic portion of the chain corresponds to 2553-2563 (LSLRSLKSNVR). Residues 2564 to 2584 (GIHANVAAALGVAELLFLLGI) traverse the membrane as a helical segment. The Extracellular segment spans residues 2585 to 2592 (HRTHNQLL). The chain crosses the membrane as a helical span at residues 2593–2613 (CTAVAILLHYFFLSTFAWLLV). Topologically, residues 2614-2634 (QGLHLYRMQVEPRNVDRGAMR) are cytoplasmic. A helical transmembrane segment spans residues 2635 to 2655 (FYHALGWGVPAVLLGLAVGLD). Topologically, residues 2656–2673 (PEGYGNPDFCWISIHEPL) are extracellular. The chain crosses the membrane as a helical span at residues 2674–2694 (IWSFAGPIVLVIVMNGTMFLL). Residues 2695-2716 (AARTSCSTGQREAKKTSVLTLR) lie on the Cytoplasmic side of the membrane. Residues 2717–2737 (SSFLLLLLVSASWLFGLLAVN) form a helical membrane-spanning segment. The Extracellular portion of the chain corresponds to 2738 to 2744 (HSILAFH). The helical transmembrane segment at 2745–2765 (YLHAGLCGLQGLAVLLLFCVL) threads the bilayer. Residues 2766 to 3301 (NADARAAWTP…SEVPRSEGHS (536 aa)) lie on the Cytoplasmic side of the membrane. Disordered stretches follow at residues 2823-2844 (SSARSGRAQDQDSQRGRSYLRD), 2879-2919 (AGAD…RPLR), and 2969-2992 (SNKDAANNNQPELALTSGDETSLG). Residues 2881–2891 (ADSDSDSDLSL) are compositionally biased toward acidic residues. A compositionally biased stretch (basic residues) spans 2910–2919 (TRGRFQRPLR). At Tyr3042 the chain carries Phosphotyrosine. A disordered region spans residues 3083-3301 (APVLHPLSRP…SEVPRSEGHS (219 aa)). Ser3090 carries the phosphoserine modification. Over residues 3094–3111 (SQERLDTAPARLEARDRG) the composition is skewed to basic and acidic residues. Low complexity-rich tracts occupy residues 3168–3189 (SPQRQLSRDPLLPSRPLDSLSR) and 3239–3261 (LSSILASFNSSALSSVQSSSTPS). A compositionally biased stretch (polar residues) spans 3276-3289 (TPRSATSHSISELS).

It belongs to the G-protein coupled receptor 2 family. LN-TM7 subfamily. As to expression, expressed in the CNS and in the eye.

Its subcellular location is the cell membrane. Its function is as follows. Receptor that may have an important role in cell/cell signaling during nervous system formation. In Mus musculus (Mouse), this protein is Cadherin EGF LAG seven-pass G-type receptor 3 (Celsr3).